A 136-amino-acid polypeptide reads, in one-letter code: NADPH-dependent 7-cyano-7-deazaguanine reductase (136 aa).

C50 functions as the Thioimide intermediate in the catalytic mechanism. Residue D57 is the Proton donor of the active site. Substrate contacts are provided by residues 72 to 74 and 91 to 92; these read YEL and HE.

The protein belongs to the GTP cyclohydrolase I family. QueF type 1 subfamily.

It is found in the cytoplasm. It catalyses the reaction 7-aminomethyl-7-carbaguanine + 2 NADP(+) = 7-cyano-7-deazaguanine + 2 NADPH + 3 H(+). It participates in tRNA modification; tRNA-queuosine biosynthesis. Its function is as follows. Catalyzes the NADPH-dependent reduction of 7-cyano-7-deazaguanine (preQ0) to 7-aminomethyl-7-deazaguanine (preQ1). The protein is NADPH-dependent 7-cyano-7-deazaguanine reductase of Prochlorococcus marinus (strain MIT 9312).